A 70-amino-acid polypeptide reads, in one-letter code: ATP synthase subunit c (70 aa).

A run of 2 helical transmembrane segments spans residues 4-24 and 47-67; these read IAAG…NGLV and FLGV…AFLV.

Belongs to the ATPase C chain family. F-type ATPases have 2 components, F(1) - the catalytic core - and F(0) - the membrane proton channel. F(1) has five subunits: alpha(3), beta(3), gamma(1), delta(1), epsilon(1). F(0) has three main subunits: a(1), b(2) and c(10-14). The alpha and beta chains form an alternating ring which encloses part of the gamma chain. F(1) is attached to F(0) by a central stalk formed by the gamma and epsilon chains, while a peripheral stalk is formed by the delta and b chains.

The protein localises to the cell membrane. Functionally, f(1)F(0) ATP synthase produces ATP from ADP in the presence of a proton or sodium gradient. F-type ATPases consist of two structural domains, F(1) containing the extramembraneous catalytic core and F(0) containing the membrane proton channel, linked together by a central stalk and a peripheral stalk. During catalysis, ATP synthesis in the catalytic domain of F(1) is coupled via a rotary mechanism of the central stalk subunits to proton translocation. Key component of the F(0) channel; it plays a direct role in translocation across the membrane. A homomeric c-ring of between 10-14 subunits forms the central stalk rotor element with the F(1) delta and epsilon subunits. The sequence is that of ATP synthase subunit c from Limosilactobacillus fermentum (strain NBRC 3956 / LMG 18251) (Lactobacillus fermentum).